Consider the following 375-residue polypeptide: Antichymotrypsin-2 (375 aa).

Belongs to the serpin family. In terms of tissue distribution, hemolymph.

Its subcellular location is the secreted. The chain is Antichymotrypsin-2 from Bombyx mori (Silk moth).